We begin with the raw amino-acid sequence, 566 residues long: Liver carboxylesterase 1 (566 aa).

The signal sequence occupies residues 1-18; the sequence is MWLRALVLATLAAFTAWG. Asn-79 carries an N-linked (GlcNAc...) asparagine glycan. Cys-87 and Cys-116 form a disulfide bridge. Ser-221 functions as the Acyl-ester intermediate in the catalytic mechanism. Cysteines 274 and 285 form a disulfide. The Charge relay system role is filled by Glu-354. Residue Ser-379 is modified to Phosphoserine. The active-site Charge relay system is His-467.

This sequence belongs to the type-B carboxylesterase/lipase family. Homotrimer and homohexamer. Binds to beta-glucuronidase.

Its subcellular location is the endoplasmic reticulum lumen. It is found in the cytoplasm. The protein resides in the lipid droplet. It carries out the reaction a carboxylic ester + H2O = an alcohol + a carboxylate + H(+). The catalysed reaction is cholesteryl (9Z-octadecenoate) + H2O = cholesterol + (9Z)-octadecenoate + H(+). The enzyme catalyses 2-(5Z,8Z,11Z,14Z-eicosatetraenoyl)-glycerol + H2O = glycerol + (5Z,8Z,11Z,14Z)-eicosatetraenoate + H(+). It catalyses the reaction prostaglandin E2 1-glyceryl ester + H2O = prostaglandin E2 + glycerol + H(+). It carries out the reaction a cholesterol ester + H2O = cholesterol + a fatty acid + H(+). The catalysed reaction is prostaglandin F2alpha 1-glyceryl ester + H2O = prostaglandin F2alpha + glycerol + H(+). In terms of biological role, involved in the detoxification of xenobiotics and in the activation of ester and amide prodrugs. Hydrolyzes aromatic and aliphatic esters, but has no catalytic activity toward amides or a fatty acyl-CoA ester. Displays fatty acid ethyl ester synthase activity, catalyzing the ethyl esterification of oleic acid to ethyloleate. Converts monoacylglycerides to free fatty acids and glycerol. Hydrolyzes of 2-arachidonoylglycerol and prostaglandins. Hydrolyzes cellular cholesteryl esters to free cholesterols and promotes reverse cholesterol transport (RCT) by facilitating both the initial and final steps in the process. First of all, allows free cholesterol efflux from macrophages to extracellular cholesterol acceptors and secondly, releases free cholesterol from lipoprotein-delivered cholesteryl esters in the liver for bile acid synthesis or direct secretion into the bile. The protein is Liver carboxylesterase 1 of Macaca fascicularis (Crab-eating macaque).